The chain runs to 209 residues: Methylthioribulose-1-phosphate dehydratase (209 aa).

Residues His-98 and His-100 each coordinate Zn(2+).

Belongs to the aldolase class II family. MtnB subfamily. Homotetramer. Zn(2+) is required as a cofactor.

The catalysed reaction is 5-(methylsulfanyl)-D-ribulose 1-phosphate = 5-methylsulfanyl-2,3-dioxopentyl phosphate + H2O. It participates in amino-acid biosynthesis; L-methionine biosynthesis via salvage pathway; L-methionine from S-methyl-5-thio-alpha-D-ribose 1-phosphate: step 2/6. Functionally, catalyzes the dehydration of methylthioribulose-1-phosphate (MTRu-1-P) into 2,3-diketo-5-methylthiopentyl-1-phosphate (DK-MTP-1-P). This chain is Methylthioribulose-1-phosphate dehydratase (mtnB), found in Bacillus subtilis (strain 168).